The primary structure comprises 487 residues: N-succinylglutamate 5-semialdehyde dehydrogenase (487 aa).

221–226 (GSSDTG) contributes to the NAD(+) binding site. Residues glutamate 244 and cysteine 278 contribute to the active site.

This sequence belongs to the aldehyde dehydrogenase family. AstD subfamily.

It catalyses the reaction N-succinyl-L-glutamate 5-semialdehyde + NAD(+) + H2O = N-succinyl-L-glutamate + NADH + 2 H(+). It functions in the pathway amino-acid degradation; L-arginine degradation via AST pathway; L-glutamate and succinate from L-arginine: step 4/5. In terms of biological role, catalyzes the NAD-dependent reduction of succinylglutamate semialdehyde into succinylglutamate. This chain is N-succinylglutamate 5-semialdehyde dehydrogenase, found in Burkholderia thailandensis (strain ATCC 700388 / DSM 13276 / CCUG 48851 / CIP 106301 / E264).